Consider the following 506-residue polypeptide: Glucan endo-1,3-beta-glucosidase 13 (506 aa).

The first 22 residues, 1 to 22 (MARDFKLIFSISILLLLLDCCY), serve as a signal peptide directing secretion. Residue Asn70 is glycosylated (N-linked (GlcNAc...) asparagine). The Proton donor role is filled by Glu119. Asn127, Asn175, and Asn212 each carry an N-linked (GlcNAc...) asparagine glycan. Glu264 acts as the Nucleophile in catalysis. N-linked (GlcNAc...) asparagine glycosylation is found at Asn356 and Asn361. The cysteines at positions 370 and 433 are disulfide-linked. Residues Asn459 and Asn465 are each glycosylated (N-linked (GlcNAc...) asparagine). Ser471 carries GPI-anchor amidated serine lipidation. Residues 472–506 (SASTPRGNELLQWILKLCLMISLFFSLQTMNSQAL) constitute a propeptide, removed in mature form.

This sequence belongs to the glycosyl hydrolase 17 family. In terms of processing, contains two additional disulfide bonds.

It localises to the secreted. It is found in the cell wall. The protein localises to the cell membrane. The catalysed reaction is Hydrolysis of (1-&gt;3)-beta-D-glucosidic linkages in (1-&gt;3)-beta-D-glucans.. The protein is Glucan endo-1,3-beta-glucosidase 13 of Arabidopsis thaliana (Mouse-ear cress).